The primary structure comprises 310 residues: Beta-ketoacyl-[acyl-carrier-protein] synthase III (310 aa).

Active-site residues include Cys116 and His239. The ACP-binding stretch occupies residues 240–244; that stretch reads QANYR. The active site involves Asn269.

It belongs to the thiolase-like superfamily. FabH family. As to quaternary structure, homodimer.

It is found in the cytoplasm. The catalysed reaction is malonyl-[ACP] + acetyl-CoA + H(+) = 3-oxobutanoyl-[ACP] + CO2 + CoA. Its pathway is lipid metabolism; fatty acid biosynthesis. Its function is as follows. Catalyzes the condensation reaction of fatty acid synthesis by the addition to an acyl acceptor of two carbons from malonyl-ACP. Catalyzes the first condensation reaction which initiates fatty acid synthesis and may therefore play a role in governing the total rate of fatty acid production. Possesses both acetoacetyl-ACP synthase and acetyl transacylase activities. Its substrate specificity determines the biosynthesis of branched-chain and/or straight-chain of fatty acids. The protein is Beta-ketoacyl-[acyl-carrier-protein] synthase III of Acholeplasma laidlawii (strain PG-8A).